A 104-amino-acid chain; its full sequence is Large ribosomal subunit protein uL24 (104 aa).

This sequence belongs to the universal ribosomal protein uL24 family. As to quaternary structure, part of the 50S ribosomal subunit.

Functionally, one of two assembly initiator proteins, it binds directly to the 5'-end of the 23S rRNA, where it nucleates assembly of the 50S subunit. One of the proteins that surrounds the polypeptide exit tunnel on the outside of the subunit. This is Large ribosomal subunit protein uL24 from Saccharopolyspora erythraea (strain ATCC 11635 / DSM 40517 / JCM 4748 / NBRC 13426 / NCIMB 8594 / NRRL 2338).